A 401-amino-acid polypeptide reads, in one-letter code: MEILVLNLGSSSIKFKLFDMKENKPLASGLAEKIGEEIGQLKIKSHLHHNEQELKEKLVIKDHASGLLMIRENLTKMGIIKDFNQIDAIGHRVVQGGDKFHAPILVNEKVMQEIGKLSILAPLHNPANLAGIEFVQKAHPHIPQIAVFDTAFHATMPSYAYMYALPYELYEKYQIRRYGFHGTSHHYVAKEAAKFLNTAYEEFNAISLHLGNGSSAAAIQKGKSVDTSMGLTPLEGLIMGTRCGDIDPTVVEYIAQCADKSLEEVMKILNYESGLKGICGDNDARNIEARKEKGDKQAKLAFEMCAYRIKKYIGAYMAVLKKVDAIIFTAGLGENYSALRESVCEGLEDLGIALHKPTNDNPGNGLVDLSQPDAKVKVLLIPTDEELEIALQAKEIAEKLK.

Asn7 provides a ligand contact to Mg(2+). Lys14 contacts ATP. Arg92 is a binding site for substrate. The Proton donor/acceptor role is filled by Asp149. Residues 209 to 213, 283 to 285, and 331 to 335 each bind ATP; these read HLGNG, DAR, and GLGEN. Residue Glu385 participates in Mg(2+) binding.

The protein belongs to the acetokinase family. Homodimer. The cofactor is Mg(2+). Mn(2+) is required as a cofactor.

It is found in the cytoplasm. It catalyses the reaction acetate + ATP = acetyl phosphate + ADP. The protein operates within metabolic intermediate biosynthesis; acetyl-CoA biosynthesis; acetyl-CoA from acetate: step 1/2. Its function is as follows. Catalyzes the formation of acetyl phosphate from acetate and ATP. Can also catalyze the reverse reaction. This chain is Acetate kinase, found in Helicobacter pylori (strain Shi470).